We begin with the raw amino-acid sequence, 43 residues long: Augerpeptide hhe9.2 (43 aa).

One can recognise an EGF-like domain in the interval 2–40 (EEVGCFPNVCKNDGNCSIETSTGMTRCQCLEGYTGHVCE). Cystine bridges form between Cys6–Cys28, Cys11–Cys30, and Cys17–Cys39.

In terms of tissue distribution, expressed by the venom duct.

The protein resides in the secreted. This is Augerpeptide hhe9.2 from Hastula hectica (Sea snail).